The chain runs to 173 residues: Shikimate kinase 1 (173 aa).

Residue 14–19 (GAGKST) participates in ATP binding. Ser18 contacts Mg(2+). Substrate is bound by residues Asp36, Arg60, and Gly82. Position 120 (Arg120) interacts with ATP. Residue Arg140 coordinates substrate. Gln157 lines the ATP pocket.

This sequence belongs to the shikimate kinase family. In terms of assembly, monomer. Requires Mg(2+) as cofactor.

Its subcellular location is the cytoplasm. It carries out the reaction shikimate + ATP = 3-phosphoshikimate + ADP + H(+). Its pathway is metabolic intermediate biosynthesis; chorismate biosynthesis; chorismate from D-erythrose 4-phosphate and phosphoenolpyruvate: step 5/7. Functionally, catalyzes the specific phosphorylation of the 3-hydroxyl group of shikimic acid using ATP as a cosubstrate. This is Shikimate kinase 1 from Citrobacter koseri (strain ATCC BAA-895 / CDC 4225-83 / SGSC4696).